Here is a 1010-residue protein sequence, read N- to C-terminus: BrkA autotransporter (1010 aa).

The signal sequence occupies residues 1–42 (MYLDRFRQCPSSLQIPRSAWRLHALAAALALAGMARLAPAAA). The Autotransporter domain occupies 742 to 1010 (LRADAGGPWA…SFHAGYRYSF (269 aa)).

It is found in the periplasm. The protein localises to the secreted. Its subcellular location is the cell surface. It localises to the cell outer membrane. Functionally, inhibits the classical pathway of complement activation and prevents accumulation of deposited C4. This Bordetella pertussis (strain Tohama I / ATCC BAA-589 / NCTC 13251) protein is BrkA autotransporter.